A 185-amino-acid polypeptide reads, in one-letter code: Biofilm operon icaADBC HTH-type negative transcriptional regulator IcaR (185 aa).

Residues 1–59 enclose the HTH tetR-type domain; the sequence is MKDKIIDNAITLFSEKGYDGTTLDDISKSVNIKKASLYYHYDNKEEIYRKSVENCFNYF. Residues 22 to 41 constitute a DNA-binding region (H-T-H motif); that stretch reads TLDDISKSVNIKKASLYYHY.

Homodimer.

Its function is as follows. Represses transcription of the icaADBC operon necessary for biofilm production. The protein is Biofilm operon icaADBC HTH-type negative transcriptional regulator IcaR (icaR) of Staphylococcus epidermidis (strain ATCC 35984 / DSM 28319 / BCRC 17069 / CCUG 31568 / BM 3577 / RP62A).